The primary structure comprises 323 residues: Coiled-coil domain-containing protein 160 (323 aa).

Positions 143–290 (SKLRLNLLNE…IKNELRTEKS (148 aa)) form a coiled coil.

This sequence belongs to the CCDC160 family.

This Bos taurus (Bovine) protein is Coiled-coil domain-containing protein 160 (CCDC160).